The following is a 495-amino-acid chain: Trigger factor (495 aa).

Residues G169 to V254 form the PPIase FKBP-type domain. The tract at residues L441 to E495 is disordered.

The protein belongs to the FKBP-type PPIase family. Tig subfamily.

Its subcellular location is the cytoplasm. It carries out the reaction [protein]-peptidylproline (omega=180) = [protein]-peptidylproline (omega=0). Its function is as follows. Involved in protein export. Acts as a chaperone by maintaining the newly synthesized protein in an open conformation. Functions as a peptidyl-prolyl cis-trans isomerase. This Rhizobium etli (strain CIAT 652) protein is Trigger factor.